The chain runs to 297 residues: Inosose dehydratase (297 aa).

The protein belongs to the IolE/MocC family. It depends on glutathione as a cofactor. Co(2+) serves as cofactor. The cofactor is Mn(2+).

It catalyses the reaction scyllo-inosose = 3D-3,5/4-trihydroxycyclohexane-1,2-dione + H2O. The protein operates within polyol metabolism; myo-inositol degradation into acetyl-CoA; acetyl-CoA from myo-inositol: step 2/7. In terms of biological role, catalyzes the dehydration of inosose (2-keto-myo-inositol, 2KMI or 2,4,6/3,5-pentahydroxycyclohexanone) to 3D-(3,5/4)-trihydroxycyclohexane-1,2-dione (D-2,3-diketo-4-deoxy-epi-inositol). This Clostridium perfringens (strain ATCC 13124 / DSM 756 / JCM 1290 / NCIMB 6125 / NCTC 8237 / Type A) protein is Inosose dehydratase.